The chain runs to 365 residues: Probable tRNA pseudouridine synthase B (365 aa).

Asp-43 serves as the catalytic Nucleophile. Positions 209-285 constitute a PUA domain; it reads YPKIVVKRSA…DHIFLEADDG (77 aa). The disordered stretch occupies residues 300–365; that stretch reads SGSGLHKDIQ…GKERHGRDHQ (66 aa). Basic and acidic residues-rich tracts occupy residues 304–318, 326–336, and 354–365; these read LHKDIQRSEGRKDTR, TGPEKTADRVW, and GGGKERHGRDHQ.

This sequence belongs to the pseudouridine synthase TruB family. Type 2 subfamily.

It carries out the reaction uridine(55) in tRNA = pseudouridine(55) in tRNA. Could be responsible for synthesis of pseudouridine from uracil-55 in the psi GC loop of transfer RNAs. The sequence is that of Probable tRNA pseudouridine synthase B from Thermoplasma acidophilum (strain ATCC 25905 / DSM 1728 / JCM 9062 / NBRC 15155 / AMRC-C165).